Reading from the N-terminus, the 362-residue chain is Chorismate synthase (362 aa).

An NADP(+)-binding site is contributed by R48. FMN contacts are provided by residues 131–133 (RAS), 243–244 (NA), G288, 303–307 (KPTSS), and R329.

The protein belongs to the chorismate synthase family. As to quaternary structure, homotetramer. FMNH2 is required as a cofactor.

It carries out the reaction 5-O-(1-carboxyvinyl)-3-phosphoshikimate = chorismate + phosphate. Its pathway is metabolic intermediate biosynthesis; chorismate biosynthesis; chorismate from D-erythrose 4-phosphate and phosphoenolpyruvate: step 7/7. Functionally, catalyzes the anti-1,4-elimination of the C-3 phosphate and the C-6 proR hydrogen from 5-enolpyruvylshikimate-3-phosphate (EPSP) to yield chorismate, which is the branch point compound that serves as the starting substrate for the three terminal pathways of aromatic amino acid biosynthesis. This reaction introduces a second double bond into the aromatic ring system. The sequence is that of Chorismate synthase from Bartonella tribocorum (strain CIP 105476 / IBS 506).